We begin with the raw amino-acid sequence, 322 residues long: Acetyl-coenzyme A carboxylase carboxyl transferase subunit alpha (322 aa).

Residues 39–293 enclose the CoA carboxyltransferase C-terminal domain; the sequence is RLQKKSQALT…RRALTDTLAE (255 aa).

The protein belongs to the AccA family. In terms of assembly, acetyl-CoA carboxylase is a heterohexamer composed of biotin carboxyl carrier protein (AccB), biotin carboxylase (AccC) and two subunits each of ACCase subunit alpha (AccA) and ACCase subunit beta (AccD).

Its subcellular location is the cytoplasm. It catalyses the reaction N(6)-carboxybiotinyl-L-lysyl-[protein] + acetyl-CoA = N(6)-biotinyl-L-lysyl-[protein] + malonyl-CoA. It functions in the pathway lipid metabolism; malonyl-CoA biosynthesis; malonyl-CoA from acetyl-CoA: step 1/1. In terms of biological role, component of the acetyl coenzyme A carboxylase (ACC) complex. First, biotin carboxylase catalyzes the carboxylation of biotin on its carrier protein (BCCP) and then the CO(2) group is transferred by the carboxyltransferase to acetyl-CoA to form malonyl-CoA. The protein is Acetyl-coenzyme A carboxylase carboxyl transferase subunit alpha of Thiobacillus denitrificans (strain ATCC 25259 / T1).